The sequence spans 215 residues: MTQSLADMRRDYTRDGLSEAQAPAEPFALFHQWFADAVKTEQPPVEANAMTVATVDTDGRPHCRILLLKGLDEQGFTFFTNYESAKGQQLAARPFAAMTFFWPTLERQVRIEGRVVKVTPQESDAYYQVRPLGSRLGAWASPQSRVIADRDELQELLKATEARFSDSQPDCPEHWGGYRLLPERIEFWQGRPSRLHDRLNYRLQGQEWVRERLAP.

Residues 9 to 12 and Lys69 contribute to the substrate site; that span reads RRDY. Residues 64 to 69, 79 to 80, Lys86, and Gln108 contribute to the FMN site; these read RILLLK and FT. Substrate contacts are provided by Tyr126, Arg130, and Ser134. FMN contacts are provided by residues 143-144 and Trp188; that span reads QS. 194-196 is a substrate binding site; it reads RLH. Arg198 lines the FMN pocket.

Belongs to the pyridoxamine 5'-phosphate oxidase family. In terms of assembly, homodimer. FMN is required as a cofactor.

It carries out the reaction pyridoxamine 5'-phosphate + O2 + H2O = pyridoxal 5'-phosphate + H2O2 + NH4(+). It catalyses the reaction pyridoxine 5'-phosphate + O2 = pyridoxal 5'-phosphate + H2O2. It functions in the pathway cofactor metabolism; pyridoxal 5'-phosphate salvage; pyridoxal 5'-phosphate from pyridoxamine 5'-phosphate: step 1/1. Its pathway is cofactor metabolism; pyridoxal 5'-phosphate salvage; pyridoxal 5'-phosphate from pyridoxine 5'-phosphate: step 1/1. In terms of biological role, catalyzes the oxidation of either pyridoxine 5'-phosphate (PNP) or pyridoxamine 5'-phosphate (PMP) into pyridoxal 5'-phosphate (PLP). The polypeptide is Pyridoxine/pyridoxamine 5'-phosphate oxidase (Pseudomonas fluorescens (strain ATCC BAA-477 / NRRL B-23932 / Pf-5)).